We begin with the raw amino-acid sequence, 55 residues long: Large ribosomal subunit protein bL33 (55 aa).

Belongs to the bacterial ribosomal protein bL33 family.

In Methylobacterium nodulans (strain LMG 21967 / CNCM I-2342 / ORS 2060), this protein is Large ribosomal subunit protein bL33.